A 264-amino-acid chain; its full sequence is Glutamate racemase (264 aa).

Substrate contacts are provided by residues 10 to 11 and 42 to 43; these read DS and YG. Catalysis depends on Cys-73, which acts as the Proton donor/acceptor. 74 to 75 provides a ligand contact to substrate; that stretch reads NT. The Proton donor/acceptor role is filled by Cys-181. 182–183 lines the substrate pocket; sequence TH.

The protein belongs to the aspartate/glutamate racemases family.

It carries out the reaction L-glutamate = D-glutamate. The protein operates within cell wall biogenesis; peptidoglycan biosynthesis. Its function is as follows. Provides the (R)-glutamate required for cell wall biosynthesis. This Thermoanaerobacter pseudethanolicus (strain ATCC 33223 / 39E) (Clostridium thermohydrosulfuricum) protein is Glutamate racemase.